Consider the following 281-residue polypeptide: Putrescine transport system permease protein PotI (281 aa).

Over 1–13 (MNNLPVVRSPWRI) the chain is Cytoplasmic. The chain crosses the membrane as a helical span at residues 14–33 (VILLLGFTFLYAPMLMLVIY). Over 34 to 68 (SFNSSKLVTVWAGWSTRWYGELLRDDAMMSAVGLS) the chain is Periplasmic. An ABC transmembrane type-1 domain is found at 65–260 (VGLSLTIAAC…GAVGIVGFIA (196 aa)). A helical transmembrane segment spans residues 69–88 (LTIAACAATAAAILGTIAAV). Residues 89–115 (VLVRFGRFRGSNGFAFMITAPLVMPDV) are Cytoplasmic-facing. The chain crosses the membrane as a helical span at residues 116-135 (ITGLSLLLLFVALAHAIGWP). Residues 136 to 140 (ADRGM) lie on the Periplasmic side of the membrane. A helical membrane pass occupies residues 141-160 (LTIWLAHVTFCTAYVAVVIS). At 161 to 186 (SRLRELDRSIEEAAMDLGATPLKVFF) the chain is on the cytoplasmic side. The helical transmembrane segment at 187 to 206 (VITLPMIMPAIISGWLLAFT) threads the bilayer. The Periplasmic portion of the chain corresponds to 207 to 243 (LSLDDLVIASFVSGPGATTLPMLVFSSVRMGVNPEIN). A helical transmembrane segment spans residues 244–263 (ALATLILGAVGIVGFIAWYL). Topologically, residues 264–281 (MARAEKQRIRDIQRARRG) are cytoplasmic.

This sequence belongs to the binding-protein-dependent transport system permease family. CysTW subfamily. As to quaternary structure, the complex is composed of two ATP-binding proteins (PotG), two transmembrane proteins (PotH and PotI) and a solute-binding protein (PotF).

It is found in the cell inner membrane. Functionally, part of the ABC transporter complex PotFGHI involved in putrescine uptake. Responsible for the translocation of the substrate across the membrane. This Escherichia coli O6:H1 (strain CFT073 / ATCC 700928 / UPEC) protein is Putrescine transport system permease protein PotI.